We begin with the raw amino-acid sequence, 371 residues long: 4-hydroxy-3-methylbut-2-en-1-yl diphosphate synthase (flavodoxin) (371 aa).

[4Fe-4S] cluster contacts are provided by cysteine 268, cysteine 271, cysteine 303, and glutamate 310.

Belongs to the IspG family. The cofactor is [4Fe-4S] cluster.

It carries out the reaction (2E)-4-hydroxy-3-methylbut-2-enyl diphosphate + oxidized [flavodoxin] + H2O + 2 H(+) = 2-C-methyl-D-erythritol 2,4-cyclic diphosphate + reduced [flavodoxin]. The protein operates within isoprenoid biosynthesis; isopentenyl diphosphate biosynthesis via DXP pathway; isopentenyl diphosphate from 1-deoxy-D-xylulose 5-phosphate: step 5/6. Its function is as follows. Converts 2C-methyl-D-erythritol 2,4-cyclodiphosphate (ME-2,4cPP) into 1-hydroxy-2-methyl-2-(E)-butenyl 4-diphosphate. This chain is 4-hydroxy-3-methylbut-2-en-1-yl diphosphate synthase (flavodoxin), found in Macrococcus caseolyticus (strain JCSC5402) (Macrococcoides caseolyticum).